Here is a 148-residue protein sequence, read N- to C-terminus: 6,7-dimethyl-8-ribityllumazine synthase (148 aa).

5-amino-6-(D-ribitylamino)uracil is bound by residues F13, 44-46 (ALE), and 73-75 (MVI). 78–79 (ET) lines the (2S)-2-hydroxy-3-oxobutyl phosphate pocket. H81 serves as the catalytic Proton donor. N106 contacts 5-amino-6-(D-ribitylamino)uracil. (2S)-2-hydroxy-3-oxobutyl phosphate is bound at residue R120.

The protein belongs to the DMRL synthase family.

It catalyses the reaction (2S)-2-hydroxy-3-oxobutyl phosphate + 5-amino-6-(D-ribitylamino)uracil = 6,7-dimethyl-8-(1-D-ribityl)lumazine + phosphate + 2 H2O + H(+). The protein operates within cofactor biosynthesis; riboflavin biosynthesis; riboflavin from 2-hydroxy-3-oxobutyl phosphate and 5-amino-6-(D-ribitylamino)uracil: step 1/2. In terms of biological role, catalyzes the formation of 6,7-dimethyl-8-ribityllumazine by condensation of 5-amino-6-(D-ribitylamino)uracil with 3,4-dihydroxy-2-butanone 4-phosphate. This is the penultimate step in the biosynthesis of riboflavin. This Agrobacterium fabrum (strain C58 / ATCC 33970) (Agrobacterium tumefaciens (strain C58)) protein is 6,7-dimethyl-8-ribityllumazine synthase.